The primary structure comprises 639 residues: 3D-(3,5/4)-trihydroxycyclohexane-1,2-dione hydrolase (639 aa).

Glu-62 contributes to the thiamine diphosphate binding site. The tract at residues 438–518 (SLPGDLQRMW…INILLFDNCG (81 aa)) is thiamine pyrophosphate binding. 2 residues coordinate Mg(2+): Asp-489 and Asn-516.

Belongs to the TPP enzyme family. Mg(2+) serves as cofactor. It depends on thiamine diphosphate as a cofactor.

The catalysed reaction is 3D-3,5/4-trihydroxycyclohexane-1,2-dione + H2O = 5-deoxy-D-glucuronate + H(+). It participates in polyol metabolism; myo-inositol degradation into acetyl-CoA; acetyl-CoA from myo-inositol: step 3/7. In terms of biological role, involved in the cleavage of the C1-C2 bond of 3D-(3,5/4)-trihydroxycyclohexane-1,2-dione (THcHDO) to yield 5-deoxy-glucuronate (5DG). The protein is 3D-(3,5/4)-trihydroxycyclohexane-1,2-dione hydrolase of Clostridium perfringens (strain 13 / Type A).